Consider the following 407-residue polypeptide: Peptidase T (407 aa).

Residue H78 participates in Zn(2+) binding. Residue D80 is part of the active site. D139 lines the Zn(2+) pocket. The active-site Proton acceptor is the E173. Zn(2+) is bound by residues E174, D196, and H378.

The protein belongs to the peptidase M20B family. Zn(2+) is required as a cofactor.

It localises to the cytoplasm. The enzyme catalyses Release of the N-terminal residue from a tripeptide.. Cleaves the N-terminal amino acid of tripeptides. The polypeptide is Peptidase T (Shewanella halifaxensis (strain HAW-EB4)).